A 121-amino-acid polypeptide reads, in one-letter code: Small ribosomal subunit protein uS13 (121 aa).

A disordered region spans residues 92–121 (RKGLPVRGQRTKTNARTRKGPRKSGVQLKK).

It belongs to the universal ribosomal protein uS13 family. As to quaternary structure, part of the 30S ribosomal subunit. Forms a loose heterodimer with protein S19. Forms two bridges to the 50S subunit in the 70S ribosome.

Its function is as follows. Located at the top of the head of the 30S subunit, it contacts several helices of the 16S rRNA. In the 70S ribosome it contacts the 23S rRNA (bridge B1a) and protein L5 of the 50S subunit (bridge B1b), connecting the 2 subunits; these bridges are implicated in subunit movement. Contacts the tRNAs in the A and P-sites. The protein is Small ribosomal subunit protein uS13 of Polynucleobacter asymbioticus (strain DSM 18221 / CIP 109841 / QLW-P1DMWA-1) (Polynucleobacter necessarius subsp. asymbioticus).